The primary structure comprises 142 residues: Hdr-like menaquinol oxidoreductase cytochrome c subunit (142 aa).

The Cytoplasmic segment spans residues Met1–Tyr6. The helical transmembrane segment at Val7 to Met27 threads the bilayer. Residues Ala28–Ser142 lie on the Extracellular side of the membrane. Residues Cys93, Cys96, His97, Cys104, Cys107, His108, Cys117, Cys120, and His121 each contribute to the heme site.

As to quaternary structure, consists of five subunits: an integral membrane subunit, a cytochrome b-like subunit, a cytochrome c subunit and two iron-sulfur subunits. Post-translationally, binds 3 heme groups per subunit.

It localises to the cell membrane. Has menaquinol-oxidizing activity. HmeA, HmeB and HmeE subunits may together catalyze electron transfer from menaquinol to cytochrome c. The chain is Hdr-like menaquinol oxidoreductase cytochrome c subunit (hmeE) from Archaeoglobus fulgidus (strain ATCC 49558 / DSM 4304 / JCM 9628 / NBRC 100126 / VC-16).